Here is a 119-residue protein sequence, read N- to C-terminus: MTVSNTVDQYTVLTGDRSKIKDLLCNRLTECGWRDEVRLLCRNILMEKAVAGAVTSNSNLTLEQLITEVTPKARTLVPDAVKKELLMKIRTILTENETEGTDNHDDDEDDEDENGTEDN.

Residues 93–119 (LTENETEGTDNHDDDEDDEDENGTEDN) form a disordered region. A compositionally biased stretch (acidic residues) spans 96–119 (NETEGTDNHDDDEDDEDENGTEDN).

Belongs to the ENY2 family. Component of the nuclear pore complex (NPC)-associated AMEX complex (anchoring and mRNA export complex), composed of at least e(y)2 and xmas-2. Component of the SAGA transcription coactivator-HAT complexes, at least composed of Ada2b, e(y)2, Pcaf/Gcn5, Taf10 and Nipped-A/Trrap. Within the SAGA complex, e(y)2, Sgf11, and not/nonstop form an additional subcomplex of SAGA called the DUB module (deubiquitination module). Component of the THO complex, composed of at least e(y)2, HPR1, THO2, THOC5, THOC6 and THOC7. Interacts with e(y)1. Interacts with su(Hw) (via zinc fingers). Interacts with xmas-2; required for localization to the nuclear periphery. Interacts with the nuclear pore complex (NPC).

The protein resides in the nucleus. The protein localises to the nucleoplasm. It is found in the cytoplasm. Functionally, involved in mRNA export coupled transcription activation by association with both the AMEX and the SAGA complexes. The SAGA complex is a multiprotein complex that activates transcription by remodeling chromatin and mediating histone acetylation and deubiquitination. Within the SAGA complex, participates in a subcomplex that specifically deubiquitinates histone H2B. The SAGA complex is recruited to specific gene promoters by activators, where it is required for transcription. Required for nuclear receptor-mediated transactivation. Involved in transcription elongation by recruiting the THO complex onto nascent mRNA. The AMEX complex functions in docking export-competent ribonucleoprotein particles (mRNPs) to the nuclear entrance of the nuclear pore complex (nuclear basket). AMEX participates in mRNA export and accurate chromatin positioning in the nucleus by tethering genes to the nuclear periphery. The sequence is that of Enhancer of yellow 2 transcription factor from Drosophila willistoni (Fruit fly).